Here is a 543-residue protein sequence, read N- to C-terminus: MAHLLTNSPIGLLGRWLSGGRLLPPTEQQPGFQLPPPYRLAATRTQPQQQQEQEQEQEQAKPATRPPWNEPQITAEGAIQVGWYSSTDPDNPQNWSFGAKLLVYLEVNLITFMVYMSVAIFSAAEGEFRTVFGVSRSVTELGMSLYVLGYGTGPMIWSPLSEIPSVGRNPPYVVSVTIFLLLSIPTAVVNNVPGFLILRFLQGFFGSPGLATGGASIADVTGLTHLPYGLYVWAVCSIAGPAVAPVIAGFSVPVKGWHWSMWEVLWAAGGCFVFLLFLPETSGPAILHLRAQRLRALTGNPAFQSQSEIAVRDARPTQIVYDALVIPWKINALDPAILFTTVYIGLVYAIFYSYFEVLPRVYITMHAMTLGQLGLIFLGAIVGTLLVLPGYFAFTHWSLNADFRRGVWPRPEKRLVPALCGSVLVPVGLFLFAWTARPDLHWVVPTVGLVLEVAGMSLVIQCVFSYVAVAYLRYSASLFAINDLARAYLAFAAIMWSDPLYDRLGVARGTTLLAGLTVGCVGGMFTLYWWGPALRKRSRFASD.

Residues Pro-24–Pro-71 form a disordered region. Asn-94 carries an N-linked (GlcNAc...) asparagine glycan. Helical transmembrane passes span Leu-101–Phe-121, Leu-141–Ser-161, Ile-178–Leu-198, Gly-203–Leu-223, Leu-230–Phe-250, Trp-259–Pro-279, Pro-335–Phe-355, Gly-374–Phe-394, Leu-415–Thr-435, Leu-440–Ile-460, Ala-476–Trp-496, and Leu-512–Pro-532.

It belongs to the major facilitator superfamily. CAR1 family.

It localises to the cell membrane. Its function is as follows. MFS-type transporter; part of the gene cluster that mediates the biosynthesis of pyranoviolin A, a pyranonigrin analog with a C-3 methoxy group. May be involved in the secretion of pyranoviolin A. This is MFS-type transporter pyvG from Aspergillus violaceofuscus (strain CBS 115571).